A 243-amino-acid chain; its full sequence is Ubiquinone/menaquinone biosynthesis C-methyltransferase UbiE (243 aa).

S-adenosyl-L-methionine contacts are provided by residues T69, D90, and 116 to 117 (DA).

This sequence belongs to the class I-like SAM-binding methyltransferase superfamily. MenG/UbiE family.

The enzyme catalyses a 2-demethylmenaquinol + S-adenosyl-L-methionine = a menaquinol + S-adenosyl-L-homocysteine + H(+). It carries out the reaction a 2-methoxy-6-(all-trans-polyprenyl)benzene-1,4-diol + S-adenosyl-L-methionine = a 5-methoxy-2-methyl-3-(all-trans-polyprenyl)benzene-1,4-diol + S-adenosyl-L-homocysteine + H(+). The protein operates within quinol/quinone metabolism; menaquinone biosynthesis; menaquinol from 1,4-dihydroxy-2-naphthoate: step 2/2. It participates in cofactor biosynthesis; ubiquinone biosynthesis. Methyltransferase required for the conversion of demethylmenaquinol (DMKH2) to menaquinol (MKH2) and the conversion of 2-polyprenyl-6-methoxy-1,4-benzoquinol (DDMQH2) to 2-polyprenyl-3-methyl-6-methoxy-1,4-benzoquinol (DMQH2). In Cupriavidus metallidurans (strain ATCC 43123 / DSM 2839 / NBRC 102507 / CH34) (Ralstonia metallidurans), this protein is Ubiquinone/menaquinone biosynthesis C-methyltransferase UbiE.